The primary structure comprises 328 residues: 4-hydroxy-3-methylbut-2-enyl diphosphate reductase (328 aa).

Cys13 provides a ligand contact to [4Fe-4S] cluster. (2E)-4-hydroxy-3-methylbut-2-enyl diphosphate contacts are provided by His41 and His75. Positions 41 and 75 each coordinate dimethylallyl diphosphate. Isopentenyl diphosphate-binding residues include His41 and His75. Cys97 serves as a coordination point for [4Fe-4S] cluster. His125 provides a ligand contact to (2E)-4-hydroxy-3-methylbut-2-enyl diphosphate. A dimethylallyl diphosphate-binding site is contributed by His125. His125 is a binding site for isopentenyl diphosphate. Glu127 (proton donor) is an active-site residue. A (2E)-4-hydroxy-3-methylbut-2-enyl diphosphate-binding site is contributed by Thr168. Residue Cys225 participates in [4Fe-4S] cluster binding. Residues Ser253, Ser254, Asn255, and Ser302 each contribute to the (2E)-4-hydroxy-3-methylbut-2-enyl diphosphate site. Positions 253, 254, 255, and 302 each coordinate dimethylallyl diphosphate. Isopentenyl diphosphate contacts are provided by Ser253, Ser254, Asn255, and Ser302.

Belongs to the IspH family. The cofactor is [4Fe-4S] cluster.

The enzyme catalyses isopentenyl diphosphate + 2 oxidized [2Fe-2S]-[ferredoxin] + H2O = (2E)-4-hydroxy-3-methylbut-2-enyl diphosphate + 2 reduced [2Fe-2S]-[ferredoxin] + 2 H(+). The catalysed reaction is dimethylallyl diphosphate + 2 oxidized [2Fe-2S]-[ferredoxin] + H2O = (2E)-4-hydroxy-3-methylbut-2-enyl diphosphate + 2 reduced [2Fe-2S]-[ferredoxin] + 2 H(+). The protein operates within isoprenoid biosynthesis; dimethylallyl diphosphate biosynthesis; dimethylallyl diphosphate from (2E)-4-hydroxy-3-methylbutenyl diphosphate: step 1/1. Its pathway is isoprenoid biosynthesis; isopentenyl diphosphate biosynthesis via DXP pathway; isopentenyl diphosphate from 1-deoxy-D-xylulose 5-phosphate: step 6/6. Catalyzes the conversion of 1-hydroxy-2-methyl-2-(E)-butenyl 4-diphosphate (HMBPP) into a mixture of isopentenyl diphosphate (IPP) and dimethylallyl diphosphate (DMAPP). Acts in the terminal step of the DOXP/MEP pathway for isoprenoid precursor biosynthesis. This is 4-hydroxy-3-methylbut-2-enyl diphosphate reductase from Chlorobium chlorochromatii (strain CaD3).